Reading from the N-terminus, the 38-residue chain is Photosystem II reaction center protein L (38 aa).

Residues 17-37 form a helical membrane-spanning segment; that stretch reads SLYWGLLLIXVLAVLFSNYFF.

It belongs to the PsbL family. PSII is composed of 1 copy each of membrane proteins PsbA, PsbB, PsbC, PsbD, PsbE, PsbF, PsbH, PsbI, PsbJ, PsbK, PsbL, PsbM, PsbT, PsbX, PsbY, PsbZ, Psb30/Ycf12, at least 3 peripheral proteins of the oxygen-evolving complex and a large number of cofactors. It forms dimeric complexes.

The protein localises to the plastid. Its subcellular location is the chloroplast thylakoid membrane. Functionally, one of the components of the core complex of photosystem II (PSII). PSII is a light-driven water:plastoquinone oxidoreductase that uses light energy to abstract electrons from H(2)O, generating O(2) and a proton gradient subsequently used for ATP formation. It consists of a core antenna complex that captures photons, and an electron transfer chain that converts photonic excitation into a charge separation. This subunit is found at the monomer-monomer interface and is required for correct PSII assembly and/or dimerization. The chain is Photosystem II reaction center protein L from Allium textile (Textile onion).